We begin with the raw amino-acid sequence, 837 residues long: Periplasmic nitrate reductase (837 aa).

The segment at residues Met1 to Ala32 is a signal peptide (tat-type signal). A 4Fe-4S Mo/W bis-MGD-type domain is found at Leu44–Asp100. [4Fe-4S] cluster-binding residues include Cys51, Cys54, Cys58, and Cys86. Mo-bis(molybdopterin guanine dinucleotide) is bound by residues Lys88, Gln155, Asn180, Cys184, Trp217–Met224, Ser248–His252, Gln267–Asp269, Met378, Gln382, Asn488, Ser514–Asp515, Lys537, Asp564, and Thr724–Ser733. Trp800 lines the substrate pocket. Asn808 and Lys825 together coordinate Mo-bis(molybdopterin guanine dinucleotide).

It belongs to the prokaryotic molybdopterin-containing oxidoreductase family. NasA/NapA/NarB subfamily. As to quaternary structure, component of the periplasmic nitrate reductase NapAB complex composed of NapA and NapB. It depends on [4Fe-4S] cluster as a cofactor. The cofactor is Mo-bis(molybdopterin guanine dinucleotide). In terms of processing, predicted to be exported by the Tat system. The position of the signal peptide cleavage has not been experimentally proven.

It is found in the periplasm. It catalyses the reaction 2 Fe(II)-[cytochrome] + nitrate + 2 H(+) = 2 Fe(III)-[cytochrome] + nitrite + H2O. Functionally, catalytic subunit of the periplasmic nitrate reductase complex NapAB. Receives electrons from NapB and catalyzes the reduction of nitrate to nitrite. This is Periplasmic nitrate reductase from Bradyrhizobium diazoefficiens (strain JCM 10833 / BCRC 13528 / IAM 13628 / NBRC 14792 / USDA 110).